Here is a 131-residue protein sequence, read N- to C-terminus: Protein TAP2 (131 aa).

The N-terminal stretch at 1 to 22 (MAKSSPTYTVLFLLGLLALSTA) is a signal peptide. The disordered stretch occupies residues 75–101 (ARSGGETDVKKMEGSMPDQGKTAGRDQ).

Tapetum of anthers.

This chain is Protein TAP2 (TAP2), found in Antirrhinum majus (Garden snapdragon).